A 364-amino-acid chain; its full sequence is Ferrochelatase (364 aa).

The Fe cation site is built by His213 and Glu294.

Belongs to the ferrochelatase family.

It localises to the cytoplasm. The enzyme catalyses heme b + 2 H(+) = protoporphyrin IX + Fe(2+). It participates in porphyrin-containing compound metabolism; protoheme biosynthesis; protoheme from protoporphyrin-IX: step 1/1. Functionally, catalyzes the ferrous insertion into protoporphyrin IX. This is Ferrochelatase from Chromobacterium violaceum (strain ATCC 12472 / DSM 30191 / JCM 1249 / CCUG 213 / NBRC 12614 / NCIMB 9131 / NCTC 9757 / MK).